The sequence spans 59 residues: UPF0434 protein HEAR2489 (59 aa).

It belongs to the UPF0434 family.

The polypeptide is UPF0434 protein HEAR2489 (Herminiimonas arsenicoxydans).